A 363-amino-acid chain; its full sequence is Peptide chain release factor 1 (363 aa).

The residue at position 237 (Gln237) is an N5-methylglutamine. Over residues 286-296 the composition is skewed to basic and acidic residues; it reads EKRRSAEESTR. The disordered stretch occupies residues 286–305; sequence EKRRSAEESTRRSLVASGDR.

It belongs to the prokaryotic/mitochondrial release factor family. Methylated by PrmC. Methylation increases the termination efficiency of RF1.

The protein resides in the cytoplasm. In terms of biological role, peptide chain release factor 1 directs the termination of translation in response to the peptide chain termination codons UAG and UAA. The polypeptide is Peptide chain release factor 1 (Shewanella baltica (strain OS155 / ATCC BAA-1091)).